Here is a 157-residue protein sequence, read N- to C-terminus: Endoribonuclease YbeY (157 aa).

The Zn(2+) site is built by H123, H127, and H133.

Belongs to the endoribonuclease YbeY family. Zn(2+) serves as cofactor.

The protein localises to the cytoplasm. Single strand-specific metallo-endoribonuclease involved in late-stage 70S ribosome quality control and in maturation of the 3' terminus of the 16S rRNA. The chain is Endoribonuclease YbeY from Limosilactobacillus fermentum (strain NBRC 3956 / LMG 18251) (Lactobacillus fermentum).